The primary structure comprises 415 residues: Multidrug resistance protein MdtA (415 aa).

Positions 1–21 (MKGSYKSRWVIVIVVVIAAIA) are cleaved as a signal peptide. Residues 31 to 47 (DSQSAAPGATKQAQQSP) show a composition bias toward polar residues. 2 disordered regions span residues 31–56 (DSQS…GMRA) and 390–415 (VVET…GARS). Basic and acidic residues predominate over residues 399-415 (PEEKATSREYAKKGARS).

This sequence belongs to the membrane fusion protein (MFP) (TC 8.A.1) family. Part of a tripartite efflux system composed of MdtA, MdtB and MdtC.

Its subcellular location is the cell inner membrane. In terms of biological role, the MdtABC tripartite complex confers resistance against novobiocin and deoxycholate. In Escherichia coli O6:H1 (strain CFT073 / ATCC 700928 / UPEC), this protein is Multidrug resistance protein MdtA.